A 535-amino-acid chain; its full sequence is Probable histone-arginine methyltransferase 1.3 (535 aa).

Met-1 carries the N-acetylmethionine modification. Residues 141–456 (EASSAKMYFH…QSYTIDLTLS (316 aa)) form the SAM-dependent MTase PRMT-type domain. Positions 158, 167, 191, 213, and 243 each coordinate S-adenosyl-L-methionine. Active-site residues include Glu-257 and Glu-266. Residue Ser-271 coordinates S-adenosyl-L-methionine. Residues 494-517 (VAQEPPLQPQPELSTQQDIQTPND) are disordered. Over residues 507–516 (STQQDIQTPN) the composition is skewed to polar residues.

Belongs to the class I-like SAM-binding methyltransferase superfamily. Protein arginine N-methyltransferase family. Interacts with PQT3 in the nucleus. Post-translationally, ubiquitinated by PQT3.

The protein localises to the nucleus. It is found in the cytoplasm. It catalyses the reaction L-arginyl-[protein] + 2 S-adenosyl-L-methionine = N(omega),N(omega)-dimethyl-L-arginyl-[protein] + 2 S-adenosyl-L-homocysteine + 2 H(+). Its function is as follows. Methylates (mono- and asymmetric dimethylation) the guanidino nitrogens of arginyl residues in several proteins involved in DNA packaging, transcription regulation, and mRNA stability. Recruited to promoters upon gene activation, methylates histone H3 and activates transcription via chromatin remodeling. Positive regulator in the oxidative stress tolerance that promotes the expression of enzymes preventing oxidative stress such as APX1 and GPX1 by histone methylation (H3R17me2a). Confers tolerance to cadmium CdCl(2) and salt NaCl stresses. The protein is Probable histone-arginine methyltransferase 1.3 (PRMT13) of Arabidopsis thaliana (Mouse-ear cress).